The primary structure comprises 178 residues: Inorganic pyrophosphatase (178 aa).

Substrate-binding residues include Lys31, Arg45, and Tyr57. Mg(2+)-binding residues include Asp67, Asp72, and Asp104. Tyr141 provides a ligand contact to substrate.

It belongs to the PPase family. In terms of assembly, homohexamer. The cofactor is Mg(2+).

The protein localises to the cytoplasm. The enzyme catalyses diphosphate + H2O = 2 phosphate + H(+). Catalyzes the hydrolysis of inorganic pyrophosphate (PPi) forming two phosphate ions. This Leptospira interrogans serogroup Icterohaemorrhagiae serovar copenhageni (strain Fiocruz L1-130) protein is Inorganic pyrophosphatase.